The following is a 216-amino-acid chain: Uracil phosphoribosyltransferase (216 aa).

5-phospho-alpha-D-ribose 1-diphosphate contacts are provided by residues arginine 85, arginine 110, and 135–143 (DPMVATGYS). Uracil-binding positions include isoleucine 200 and 205-207 (GDA). Aspartate 206 lines the 5-phospho-alpha-D-ribose 1-diphosphate pocket.

Belongs to the UPRTase family. It depends on Mg(2+) as a cofactor.

It catalyses the reaction UMP + diphosphate = 5-phospho-alpha-D-ribose 1-diphosphate + uracil. It participates in pyrimidine metabolism; UMP biosynthesis via salvage pathway; UMP from uracil: step 1/1. Allosterically activated by GTP. Catalyzes the conversion of uracil and 5-phospho-alpha-D-ribose 1-diphosphate (PRPP) to UMP and diphosphate. The protein is Uracil phosphoribosyltransferase of Burkholderia multivorans (strain ATCC 17616 / 249).